Consider the following 113-residue polypeptide: Integration host factor subunit alpha (113 aa).

Residues 88–113 (ALNGGVSDETEGADDDDDDEEGEGDE) are disordered. A compositionally biased stretch (acidic residues) spans 95–113 (DETEGADDDDDDEEGEGDE).

Belongs to the bacterial histone-like protein family. Heterodimer of an alpha and a beta chain.

This protein is one of the two subunits of integration host factor, a specific DNA-binding protein that functions in genetic recombination as well as in transcriptional and translational control. In Anaeromyxobacter dehalogenans (strain 2CP-C), this protein is Integration host factor subunit alpha.